We begin with the raw amino-acid sequence, 332 residues long: tRNA dimethylallyltransferase (332 aa).

ATP is bound at residue 17–24; that stretch reads GPTCSGKS. Position 19–24 (19–24) interacts with substrate; that stretch reads TCSGKS. 2 interaction with substrate tRNA regions span residues 42–45 and 166–170; these read DSMQ and QRVAR.

It belongs to the IPP transferase family. As to quaternary structure, monomer. Mg(2+) is required as a cofactor.

The enzyme catalyses adenosine(37) in tRNA + dimethylallyl diphosphate = N(6)-dimethylallyladenosine(37) in tRNA + diphosphate. In terms of biological role, catalyzes the transfer of a dimethylallyl group onto the adenine at position 37 in tRNAs that read codons beginning with uridine, leading to the formation of N6-(dimethylallyl)adenosine (i(6)A). This is tRNA dimethylallyltransferase from Gluconacetobacter diazotrophicus (strain ATCC 49037 / DSM 5601 / CCUG 37298 / CIP 103539 / LMG 7603 / PAl5).